The chain runs to 156 residues: Protein CURVATURE THYLAKOID 1C, chloroplastic (156 aa).

Residues 1 to 55 constitute a chloroplast transit peptide; the sequence is MASISATLPSPLLLTQRKSNLTSIQKLPFSLTRGTNDLSPLSLTRNPSSISLMVK. Topologically, residues 56 to 83 are stromal; it reads ASGESSDSSTDLDVVSTIQNVWDKSEDR. The helical transmembrane segment at 84 to 104 threads the bilayer; the sequence is LGLIGLGFAGIVALWASLNLI. The Lumenal segment spans residues 105 to 109; it reads TAIDK. Residues 110–130 form a helical membrane-spanning segment; that stretch reads LPVISSGFELVGILFSTWFTY. The Stromal portion of the chain corresponds to 131–156; sequence RYLLFKPDRQELSKIVKKSVADILGQ.

The protein belongs to the CURT family. In terms of assembly, homo- and heterodimers and trimers. Interacts with PSAD2.

It is found in the plastid. It localises to the chloroplast thylakoid membrane. Its function is as follows. Determines thylakoid architecture by inducing membrane curvature. This chain is Protein CURVATURE THYLAKOID 1C, chloroplastic (CURT1C), found in Arabidopsis thaliana (Mouse-ear cress).